Reading from the N-terminus, the 145-residue chain is MRVVIQRVNHAQVDIDGKTVGNIGKGFLLLVGIKNGDDLSVIKKAADKIAKMRIFEDEEGKTNLSLKDVNGEILSVSQFTLMANTKKGNRPSFVEAMRPPMSKELWEDFNKELENDGFHVETGEFGADMKVSLENDGPFTIVLDL.

The Gly-cisPro motif, important for rejection of L-amino acids signature appears at 137-138 (GP).

The protein belongs to the DTD family. In terms of assembly, homodimer.

Its subcellular location is the cytoplasm. It catalyses the reaction glycyl-tRNA(Ala) + H2O = tRNA(Ala) + glycine + H(+). The enzyme catalyses a D-aminoacyl-tRNA + H2O = a tRNA + a D-alpha-amino acid + H(+). Its function is as follows. An aminoacyl-tRNA editing enzyme that deacylates mischarged D-aminoacyl-tRNAs. Also deacylates mischarged glycyl-tRNA(Ala), protecting cells against glycine mischarging by AlaRS. Acts via tRNA-based rather than protein-based catalysis; rejects L-amino acids rather than detecting D-amino acids in the active site. By recycling D-aminoacyl-tRNA to D-amino acids and free tRNA molecules, this enzyme counteracts the toxicity associated with the formation of D-aminoacyl-tRNA entities in vivo and helps enforce protein L-homochirality. The protein is D-aminoacyl-tRNA deacylase of Lactobacillus acidophilus (strain ATCC 700396 / NCK56 / N2 / NCFM).